The following is a 227-amino-acid chain: Ribosomal RNA large subunit methyltransferase E (227 aa).

The S-adenosyl-L-methionine site is built by glycine 78, tryptophan 80, aspartate 103, aspartate 119, and aspartate 143. Lysine 183 (proton acceptor) is an active-site residue.

It belongs to the class I-like SAM-binding methyltransferase superfamily. RNA methyltransferase RlmE family.

It localises to the cytoplasm. The catalysed reaction is uridine(2552) in 23S rRNA + S-adenosyl-L-methionine = 2'-O-methyluridine(2552) in 23S rRNA + S-adenosyl-L-homocysteine + H(+). Its function is as follows. Specifically methylates the uridine in position 2552 of 23S rRNA at the 2'-O position of the ribose in the fully assembled 50S ribosomal subunit. The polypeptide is Ribosomal RNA large subunit methyltransferase E (Rickettsia peacockii (strain Rustic)).